The primary structure comprises 876 residues: Ergothioneine biosynthesis protein 1 (876 aa).

The segment at 36 to 350 is L-histidine N(alpha)-methyltransferase; that stretch reads IIDIRRVAVE…TYGNEYGLHL (315 aa). Residue Tyr-88 coordinates L-histidine. S-adenosyl-L-methionine is bound by residues Gly-119, Lys-125, and Asp-146. L-histidine is bound by residues Asn-202, Tyr-242, and 315 to 317; that span reads EQS. Residues 378–874 are hercynylcysteine S-oxide synthase; sequence ALWATWDVVT…YAWVGARVVR (497 aa). Residues His-413, His-506, and His-510 each coordinate Fe cation. Disordered stretches follow at residues 631–650 and 732–761; these read GTTN…QQLP and TNNG…SNTT. A compositionally biased stretch (low complexity) spans 744-758; that stretch reads PSSETPAESSSPSDS.

In the N-terminal section; belongs to the methyltransferase superfamily. EgtD family. It in the C-terminal section; belongs to the EgtB family. Fe(2+) is required as a cofactor.

It localises to the cytoplasm. The protein localises to the nucleus. It catalyses the reaction L-histidine + 3 S-adenosyl-L-methionine = hercynine + 3 S-adenosyl-L-homocysteine + 3 H(+). It carries out the reaction hercynine + L-cysteine + O2 = S-(hercyn-2-yl)-L-cysteine S-oxide + H2O. It functions in the pathway amino-acid biosynthesis; ergothioneine biosynthesis. Its function is as follows. Catalyzes the SAM-dependent triple methylation of the alpha-amino group of histidine to form hercynine and subsequent conjugation with cysteine and oxygen to form hercynylcysteine sulfoxide, the first two steps in the biosynthesis pathway of ergothioneine. Ergothioneine is an unusual thio-histidine betaine amino acid that acts as an antioxidant against peroxide in conidia and contributes to conidial longevity. The chain is Ergothioneine biosynthesis protein 1 from Neurospora crassa (strain ATCC 24698 / 74-OR23-1A / CBS 708.71 / DSM 1257 / FGSC 987).